Consider the following 454-residue polypeptide: tRNA modification GTPase MnmE (454 aa).

Positions 23, 80, and 120 each coordinate (6S)-5-formyl-5,6,7,8-tetrahydrofolate. The TrmE-type G domain occupies 216 to 377; that stretch reads TIKIVIAGPP…LKNKILEITT (162 aa). K(+) is bound at residue N226. GTP contacts are provided by residues 226 to 231, 245 to 251, and 270 to 273; these read NVGKSS, TNIPGTT, and DTAG. S230 contributes to the Mg(2+) binding site. K(+) contacts are provided by T245, I247, and T250. T251 provides a ligand contact to Mg(2+). (6S)-5-formyl-5,6,7,8-tetrahydrofolate is bound at residue K454.

Belongs to the TRAFAC class TrmE-Era-EngA-EngB-Septin-like GTPase superfamily. TrmE GTPase family. As to quaternary structure, homodimer. Heterotetramer of two MnmE and two MnmG subunits. It depends on K(+) as a cofactor.

The protein localises to the cytoplasm. Exhibits a very high intrinsic GTPase hydrolysis rate. Involved in the addition of a carboxymethylaminomethyl (cmnm) group at the wobble position (U34) of certain tRNAs, forming tRNA-cmnm(5)s(2)U34. The protein is tRNA modification GTPase MnmE of Buchnera aphidicola subsp. Cinara cedri (strain Cc).